A 947-amino-acid polypeptide reads, in one-letter code: Serine/threonine-protein kinase PKH2 (947 aa).

A compositionally biased stretch (basic residues) spans 1–14 (MHKFRYSLHQHYSK). Disordered regions lie at residues 1-43 (MHKF…SSSS), 108-132 (SLGN…LSSH), and 162-212 (FNHL…NEEN). Positions 108–117 (SLGNTTNETG) are enriched in polar residues. Acidic residues predominate over residues 187 to 198 (NTEEEENNDDTD). Positions 199–212 (EIPKSETLKQNEEN) are enriched in basic and acidic residues. Residues 240 to 502 (FKFGKELGEG…IPEIQKHYFF (263 aa)) enclose the Protein kinase domain. Residues 250-252 (SYS) and Lys-269 contribute to the ATP site. Residues 271–316 (LDKRHIIKEKKVKYVNIEKHALNRLSNRLGVISLYFTFQDKDSLYF) are PIF-pocket. ATP-binding positions include 319 to 321 (DYA) and Glu-325. Asp-364 acts as the Proton acceptor in catalysis. ATP contacts are provided by Glu-368 and Asp-382. 2 stretches are compositionally biased toward low complexity: residues 550–579 (VKKS…KGSS) and 618–632 (SSTS…SNSN). Disordered stretches follow at residues 550–598 (VKKS…STEK), 611–644 (KPAT…QQDY), 660–686 (SVGS…IHQQ), and 794–816 (NMKR…ASTS). The span at 802–811 (DSKKSMDIER) shows a compositional bias: basic and acidic residues.

Belongs to the protein kinase superfamily. AGC Ser/Thr protein kinase family. PDPK1 subfamily.

It localises to the nucleus. It is found in the cytoplasm. The protein resides in the cell cortex. The catalysed reaction is L-seryl-[protein] + ATP = O-phospho-L-seryl-[protein] + ADP + H(+). It catalyses the reaction L-threonyl-[protein] + ATP = O-phospho-L-threonyl-[protein] + ADP + H(+). Serine/threonine-protein kinase which is part sphingolipid-mediated signaling pathway that is required for the internalization step of endocytosis by regulating eisosome assembly and organization, and modulating the organization of the plasma membrane. Phosphorylates and activates PKC1. Activates YPK1 and YPK2, 2 components of signaling cascade required for maintenance of cell wall integrity. Required for stress-induced P-body assembly and regulates global mRNA decay at the deadenylation step. This chain is Serine/threonine-protein kinase PKH2, found in Candida albicans (strain SC5314 / ATCC MYA-2876) (Yeast).